A 92-amino-acid chain; its full sequence is Small ribosomal subunit protein uS19 (92 aa).

Belongs to the universal ribosomal protein uS19 family.

Functionally, protein S19 forms a complex with S13 that binds strongly to the 16S ribosomal RNA. This chain is Small ribosomal subunit protein uS19, found in Nostoc sp. (strain PCC 7120 / SAG 25.82 / UTEX 2576).